Consider the following 1474-residue polypeptide: SH3 and multiple ankyrin repeat domains protein 2 (1474 aa).

The segment covering Leu-66–Ser-76 has biased composition (polar residues). A disordered region spans residues Leu-66–Pro-125. An SH3 domain is found at Val-148–Cys-207. Position 162 is a phosphoserine (Gln-162). In terms of domain architecture, PDZ spans Thr-248–Thr-342. Phosphoserine is present on Ser-373. The segment at Arg-392–Asn-413 is disordered. Ser-457 bears the Phosphoserine mark. At Thr-486 the chain carries Phosphothreonine. The tract at residues Leu-504 to Cys-534 is disordered. Residues Ile-513–Pro-529 are compositionally biased toward pro residues. Residue Ser-586 is modified to Phosphoserine. Disordered stretches follow at residues Thr-659–Lys-920, Pro-947–Ala-995, and Pro-1057–Asp-1153. Positions Ser-666 to Ser-678 are enriched in low complexity. Basic and acidic residues predominate over residues Val-711–Arg-722. Position 724 is a phosphoserine (Ser-724). Over residues Leu-783–Gly-795 the composition is skewed to gly residues. Low complexity-rich tracts occupy residues Pro-811 to Pro-823 and Arg-833 to Ser-846. Composition is skewed to basic and acidic residues over residues Ala-847–Leu-868 and Arg-899–Lys-920. Thr-903 bears the Phosphothreonine mark. The segment covering Ser-1075–Thr-1085 has biased composition (polar residues). Basic and acidic residues predominate over residues Val-1119–Glu-1130. Low complexity predominate over residues Thr-1131–Ser-1151. An SH3-binding motif is present at residues Pro-1169–Pro-1175. Disordered regions lie at residues Glu-1195–Ala-1216 and Asn-1260–Lys-1401. A compositionally biased stretch (pro residues) spans Ile-1202–Gly-1212. Positions Ser-1291 to Val-1305 are enriched in low complexity. A glycan (O-linked (GlcNAc) threonine) is linked at Thr-1292. Over residues Pro-1307–Ser-1317 the composition is skewed to polar residues. Phosphoserine occurs at positions 1334 and 1338. Composition is skewed to low complexity over residues Ser-1352–Ser-1363 and Arg-1385–Ser-1399. Residues Trp-1411–Arg-1474 enclose the SAM domain.

Belongs to the SHANK family. Is part of a complex with DLG4/PSD-95 and DLGAP1/GKAP. Interacts with CTTN/cortactin SH3 domain, DLGAP1/GKAP and alpha-latrotoxin receptor 1. Interacts with DNM2, DBNL, GRID2, BAIAP2, SLC9A3, PLCB3 and CFTR. Interacts with ABI1 (via SH3 domain). Interacts (via proline-rich region) with PDE4D isoform 5 (via N-terminal region). Interacts with PDE4D isoform 33, isoform 4, isoform 7, isoform 8 and isoform 9 but not isoform 32 and isoform 6. Interacts weakly with PDE4D isoform 31. Interacts with ABI1. As to expression, expressed in epithelial cells (at protein level). All isoforms except isoform 7 are expressed predominantly in brain, with highest levels in olfactory bulb, cerebral cortex, cerebellum, central gray matter and hippocampus. Moderate levels of expression are seen in the caudate putamen, thalamic nuclei and brain stem. In cerebellum primarily expressed in Purkinje cells. Isoform 7 is not expressed in brain but expressed in liver, cholangiocytes and thymus. Isoform 7 is present in pancreas, colonic mucosa and thymocytes (at protein level).

The protein localises to the apical cell membrane. It localises to the cytoplasm. Its subcellular location is the synapse. The protein resides in the postsynaptic density. It is found in the cell projection. The protein localises to the growth cone. It localises to the dendritic spine. Its function is as follows. Seems to be an adapter protein in the postsynaptic density (PSD) of excitatory synapses that interconnects receptors of the postsynaptic membrane including NMDA-type and metabotropic glutamate receptors, and the actin-based cytoskeleton. May play a role in the structural and functional organization of the dendritic spine and synaptic junction. The protein is SH3 and multiple ankyrin repeat domains protein 2 (Shank2) of Rattus norvegicus (Rat).